The sequence spans 237 residues: Type II secretion system protein J (237 aa).

The propeptide at 1-6 (MRLQRG) is leader sequence. Phe-7 carries the N-methylphenylalanine modification. A helical transmembrane segment spans residues 7-29 (FTLLELLIAIAIFALLALATYRM). The interval 203–237 (PLKQDQPQGQPGGENGENGEGGVPQPPEGMPGAPE) is disordered. The segment covering 212–224 (QPGGENGENGEGG) has biased composition (gly residues). Positions 226 to 237 (PQPPEGMPGAPE) are enriched in pro residues.

Belongs to the GSP J family. Type II secretion is composed of four main components: the outer membrane complex, the inner membrane complex, the cytoplasmic secretion ATPase and the periplasm-spanning pseudopilus. Forms the tip of the type II pseudopilus by interacting with XcpV, XcpU and XcpX. Interacts with core component XcpT. Cleaved by prepilin peptidase. Post-translationally, methylated by prepilin peptidase at the amino group of the N-terminal phenylalanine once the leader sequence is cleaved by prepilin peptidase.

It is found in the cell inner membrane. In terms of biological role, component of the type II secretion system required for the energy-dependent secretion of extracellular factors such as proteases and toxins from the periplasm. Part of the pseudopilus tip complex that is critical for the recognition and binding of secretion substrates. Type II pseudopilus confers increased bacterial adhesive capabilities. The protein is Type II secretion system protein J (xcpW) of Pseudomonas aeruginosa (strain ATCC 15692 / DSM 22644 / CIP 104116 / JCM 14847 / LMG 12228 / 1C / PRS 101 / PAO1).